Here is a 217-residue protein sequence, read N- to C-terminus: Imidazole glycerol phosphate synthase subunit HisH (217 aa).

The region spanning 3–217 (SVAVIDYGMG…FLRWEPWSSR (215 aa)) is the Glutamine amidotransferase type-1 domain. The active-site Nucleophile is the C82. Residues H193 and E195 contribute to the active site.

In terms of assembly, heterodimer of HisH and HisF.

It is found in the cytoplasm. It catalyses the reaction 5-[(5-phospho-1-deoxy-D-ribulos-1-ylimino)methylamino]-1-(5-phospho-beta-D-ribosyl)imidazole-4-carboxamide + L-glutamine = D-erythro-1-(imidazol-4-yl)glycerol 3-phosphate + 5-amino-1-(5-phospho-beta-D-ribosyl)imidazole-4-carboxamide + L-glutamate + H(+). It carries out the reaction L-glutamine + H2O = L-glutamate + NH4(+). It functions in the pathway amino-acid biosynthesis; L-histidine biosynthesis; L-histidine from 5-phospho-alpha-D-ribose 1-diphosphate: step 5/9. Its function is as follows. IGPS catalyzes the conversion of PRFAR and glutamine to IGP, AICAR and glutamate. The HisH subunit catalyzes the hydrolysis of glutamine to glutamate and ammonia as part of the synthesis of IGP and AICAR. The resulting ammonia molecule is channeled to the active site of HisF. The polypeptide is Imidazole glycerol phosphate synthase subunit HisH (Methylococcus capsulatus (strain ATCC 33009 / NCIMB 11132 / Bath)).